Consider the following 166-residue polypeptide: Small ribosomal subunit protein bS6 (166 aa).

Composition is skewed to basic and acidic residues over residues 96–142 (HEEG…DRPP) and 149–166 (GGDRGPRRPREGFEGGAE). Residues 96-166 (HEEGPSAMMQ…PREGFEGGAE (71 aa)) are disordered.

This sequence belongs to the bacterial ribosomal protein bS6 family.

In terms of biological role, binds together with bS18 to 16S ribosomal RNA. The polypeptide is Small ribosomal subunit protein bS6 (Mesorhizobium japonicum (strain LMG 29417 / CECT 9101 / MAFF 303099) (Mesorhizobium loti (strain MAFF 303099))).